The sequence spans 31 residues: Photosystem II reaction center protein T (31 aa).

A helical transmembrane segment spans residues 3–23 (AFSYTLLMALAAVTLFFAVAF).

This sequence belongs to the PsbT family. As to quaternary structure, PSII is composed of 1 copy each of membrane proteins PsbA, PsbB, PsbC, PsbD, PsbE, PsbF, PsbH, PsbI, PsbJ, PsbK, PsbL, PsbM, PsbT, PsbX, PsbY, Psb30/Ycf12, peripheral proteins PsbO, CyanoQ (PsbQ), PsbU, PsbV and a large number of cofactors. It forms dimeric complexes.

The protein localises to the cellular thylakoid membrane. In terms of biological role, found at the monomer-monomer interface of the photosystem II (PS II) dimer, plays a role in assembly and dimerization of PSII. PSII is a light-driven water plastoquinone oxidoreductase, using light energy to abstract electrons from H(2)O, generating a proton gradient subsequently used for ATP formation. The protein is Photosystem II reaction center protein T of Prochlorococcus marinus (strain MIT 9211).